Reading from the N-terminus, the 81-residue chain is UPF0248 protein TK0315 (81 aa).

Belongs to the UPF0248 family.

This chain is UPF0248 protein TK0315, found in Thermococcus kodakarensis (strain ATCC BAA-918 / JCM 12380 / KOD1) (Pyrococcus kodakaraensis (strain KOD1)).